The following is a 383-amino-acid chain: UDP-N-acetylenolpyruvoylglucosamine reductase (383 aa).

In terms of domain architecture, FAD-binding PCMH-type spans 42 to 212 (LSCQAMQLIT…TRVGFKLHKD (171 aa)). Arg-189 is an active-site residue. Ser-267 (proton donor) is an active-site residue. Residue Glu-369 is part of the active site.

It belongs to the MurB family. It depends on FAD as a cofactor.

It localises to the cytoplasm. It catalyses the reaction UDP-N-acetyl-alpha-D-muramate + NADP(+) = UDP-N-acetyl-3-O-(1-carboxyvinyl)-alpha-D-glucosamine + NADPH + H(+). The protein operates within cell wall biogenesis; peptidoglycan biosynthesis. Its function is as follows. Cell wall formation. The sequence is that of UDP-N-acetylenolpyruvoylglucosamine reductase from Psychrobacter sp. (strain PRwf-1).